We begin with the raw amino-acid sequence, 414 residues long: uncharacterized protein (414 aa).

One can recognise a Nop domain in the interval 246-360; that stretch reads EAPNITKLAG…LNKRVEEIRR (115 aa). Residues 358–414 are disordered; the sequence is IRRKYPKPPKKKKKEKPKAKKKEKKGKKEKSKKKKDKKKDKKGKKERKVIGKTKSRK. Basic residues predominate over residues 361-414; sequence KYPKPPKKKKKEKPKAKKKEKKGKKEKSKKKKDKKKDKKGKKERKVIGKTKSRK.

It belongs to the NOP5/NOP56 family.

This is an uncharacterized protein from Methanocaldococcus jannaschii (strain ATCC 43067 / DSM 2661 / JAL-1 / JCM 10045 / NBRC 100440) (Methanococcus jannaschii).